A 587-amino-acid polypeptide reads, in one-letter code: Prolycopene isomerase 1, chloroplastic (587 aa).

The segment covering 1 to 13 (MLCLSLNSSSTSP) has biased composition (low complexity). Positions 1–21 (MLCLSLNSSSTSPPKSPLHHS) are disordered. A chloroplast-targeting transit peptide spans 1 to 50 (MLCLSLNSSSTSPPKSPLHHSFSRRSMRSWVCSPRVQRKKLGFWSSPKAV).

Belongs to the carotenoid/retinoid oxidoreductase family. CrtISO subfamily. NAD(+) serves as cofactor. Requires NADP(+) as cofactor. It depends on FAD as a cofactor. As to expression, up-regulated in the flower buds and flower lip tissue, while it is weakly expressed in leaves.

The protein resides in the plastid. Its subcellular location is the chloroplast membrane. It carries out the reaction 7,7',9,9'-tetra-cis-lycopene = all-trans-lycopene. Its pathway is carotenoid biosynthesis; lycopene biosynthesis. Functionally, carotene cis-trans-isomerase that converts 7,9,9'-tri-cis-neurosporene to 9'-cis-neurosporene and 7,9,9',7'-tetra-cis-lycopene (also known as prolycopene) into all-trans-lycopene. Isomerization requires redox-active components, suggesting that isomerization is achieved by a reversible redox reaction acting at specific double bonds. Isomerizes adjacent cis-double bonds at C7 and C9 pairwise into the trans-configuration, but is incapable of isomerizing single cis-double bonds at C9 and C9'. This Oncidium hybrid cultivar (Orchid) protein is Prolycopene isomerase 1, chloroplastic (CRTISO1).